Consider the following 961-residue polypeptide: IQ motif and SEC7 domain-containing protein 1 (961 aa).

Residues 21 to 113 (SGVEGEAPSS…SLSESYELSS (93 aa)) are disordered. Residues 29–38 (SSETGTSLDS) show a composition bias toward polar residues. Phosphoserine is present on residues Ser88, Ser104, and Ser106. The 30-residue stretch at 133–162 (TRHAARTIQTAFRQYQMNKNFERLRSSMSE) folds into the IQ domain. Phosphoserine is present on residues Ser179, Ser247, and Ser251. Disordered stretches follow at residues 263–291 (SEEV…HRKL), 310–332 (LSPP…DLRL), and 347–515 (KEDK…DSPA). Residues 272 to 291 (ARARDTEPKPGLHGMDHRKL) show a composition bias toward basic and acidic residues. Basic and acidic residues-rich tracts occupy residues 364 to 374 (ERPEPRLRVEH) and 428 to 444 (LPRE…RPLE). The segment covering 469–487 (DSINSTSNSNDTINCSSES) has biased composition (low complexity). Ser510 and Ser513 each carry phosphoserine. The SEC7 domain occupies 515–708 (AFSNDVIRKR…IGIYERIRKR (194 aa)). The 93-residue stretch at 772-864 (HQREIFLFND…LRESVAEVQE (93 aa)) folds into the PH domain. Positions 846–877 (QDRKKFTDDLRESVAEVQEMEKHRIESELEKQ) form a coiled coil. Phosphoserine is present on Ser890. A Phosphotyrosine modification is found at Tyr909. Residues 920-961 (LSSSLRDLSEAGKRGRRSSAGSLESNVEFQPFQPPQPPVLCS) are disordered. A phosphoserine mark is found at Ser922 and Ser923. Residues 938 to 947 (SAGSLESNVE) are compositionally biased toward polar residues. A compositionally biased stretch (pro residues) spans 951–961 (FQPPQPPVLCS).

This sequence belongs to the BRAG family. In terms of assembly, interacts with ARF1 and ARF6. Interacts with GRIA2; the interaction is required for ARF6 activation. Expressed in hippocampus.

It is found in the cytoplasm. The protein localises to the nucleus. It localises to the postsynaptic density. The protein resides in the cytoplasmic vesicle. Its subcellular location is the secretory vesicle. It is found in the synaptic vesicle. In terms of biological role, guanine nucleotide exchange factor for ARF1 and ARF6. Guanine nucleotide exchange factor activity is enhanced by lipid binding. Accelerates GTP binding by ARFs of all three classes. Guanine nucleotide exchange protein for ARF6, mediating internalization of beta-1 integrin. Involved in neuronal development. In neurons, plays a role in the control of vesicle formation by endocytoc cargo. Upon long term depression, interacts with GRIA2 and mediates the activation of ARF6 to internalize synaptic AMPAR receptors. This is IQ motif and SEC7 domain-containing protein 1 (Iqsec1) from Mus musculus (Mouse).